The sequence spans 388 residues: Putative [LysW]-aminoadipate semialdehyde/glutamate semialdehyde transaminase (388 aa).

Pyridoxal 5'-phosphate-binding positions include 100 to 101 and F127; that span reads GT. R130 lines the substrate pocket. 211–214 provides a ligand contact to pyridoxal 5'-phosphate; it reads DEIQ. K240 carries the post-translational modification N6-(pyridoxal phosphate)lysine. S268 serves as a coordination point for substrate. Position 269 (T269) interacts with pyridoxal 5'-phosphate.

The protein belongs to the class-III pyridoxal-phosphate-dependent aminotransferase family. LysJ subfamily. Homodimer. Requires pyridoxal 5'-phosphate as cofactor.

It is found in the cytoplasm. It catalyses the reaction [amino-group carrier protein]-C-terminal-gamma-(L-lysyl)-L-glutamate + 2-oxoglutarate = [amino-group carrier protein]-C-terminal-N-(1-carboxy-5-oxopentan-1-yl)-L-glutamine + L-glutamate. The catalysed reaction is [amino-group carrier protein]-C-terminal-gamma-(L-ornithyl)-L-glutamate + 2-oxoglutarate = [amino-group carrier protein]-C-terminal-gamma-(L-glutamyl-5-semialdehyde)-L-glutamate + L-glutamate. Its pathway is amino-acid biosynthesis; L-lysine biosynthesis via AAA pathway; L-lysine from L-alpha-aminoadipate (Thermus route): step 4/5. It participates in amino-acid biosynthesis; L-arginine biosynthesis. In terms of biological role, involved in both the arginine and lysine biosynthetic pathways. This chain is Putative [LysW]-aminoadipate semialdehyde/glutamate semialdehyde transaminase, found in Aeropyrum pernix (strain ATCC 700893 / DSM 11879 / JCM 9820 / NBRC 100138 / K1).